Reading from the N-terminus, the 168-residue chain is Crossover junction endodeoxyribonuclease RuvC (168 aa).

Residues Asp-8, Glu-68, and Asp-140 contribute to the active site. Mg(2+)-binding residues include Asp-8, Glu-68, and Asp-140.

It belongs to the RuvC family. Homodimer which binds Holliday junction (HJ) DNA. The HJ becomes 2-fold symmetrical on binding to RuvC with unstacked arms; it has a different conformation from HJ DNA in complex with RuvA. In the full resolvosome a probable DNA-RuvA(4)-RuvB(12)-RuvC(2) complex forms which resolves the HJ. Mg(2+) is required as a cofactor.

It localises to the cytoplasm. It catalyses the reaction Endonucleolytic cleavage at a junction such as a reciprocal single-stranded crossover between two homologous DNA duplexes (Holliday junction).. In terms of biological role, the RuvA-RuvB-RuvC complex processes Holliday junction (HJ) DNA during genetic recombination and DNA repair. Endonuclease that resolves HJ intermediates. Cleaves cruciform DNA by making single-stranded nicks across the HJ at symmetrical positions within the homologous arms, yielding a 5'-phosphate and a 3'-hydroxyl group; requires a central core of homology in the junction. The consensus cleavage sequence is 5'-(A/T)TT(C/G)-3'. Cleavage occurs on the 3'-side of the TT dinucleotide at the point of strand exchange. HJ branch migration catalyzed by RuvA-RuvB allows RuvC to scan DNA until it finds its consensus sequence, where it cleaves and resolves the cruciform DNA. The protein is Crossover junction endodeoxyribonuclease RuvC of Lawsonia intracellularis (strain PHE/MN1-00).